Reading from the N-terminus, the 1159-residue chain is CRISPR-associated endoribonuclease Cas13a (1159 aa).

Residues 1-11 are binds crRNA repeat and spacer; the sequence is MKVTKVGGISH. Residues 1 to 170 form an NTD region; sequence MKVTKVGGIS…NNIEKVEGKS (170 aa). Binds crRNA repeat stretches follow at residues 139–151, 172–176, 224–233, 271–276, 294–297, and 301–305; these read NKINSLKYSFEKN, RNIIY, REFYHEIIGR, QVFYKY, HFVE, and SQLLK. Residues 171-360 are helical-1; sequence KRNIIYDYYR…YNYYLQDGEI (190 aa). The tract at residues 319 to 328 is binds crRNA processing site; that stretch reads KIKRIFEYQN. 2 binds crRNA repeat regions span residues 336 to 340 and 371 to 378; these read KLLNK and QNEAFLRN. The segment at 361–508 is HEPN-like fold 1-I; that stretch reads ATSDFIARNR…SKKMFQNEIN (148 aa). Residues Arg472 and His477 each act as for target RNA cleavage in the active site. The helical-2 stretch occupies residues 509 to 751; the sequence is EKKLKLKIFR…EFLREIKLGN (243 aa). A binds target RNA region spans residues 519–522; the sequence is QLNS. A binds crRNA spacer region spans residues 547–558; sequence NKNIPFVPSFTK. Residues 590–597 form a binds target RNA region; that stretch reads DAQIYLLK. The segment at 718 to 722 is binds crRNA spacer; sequence KQEFD. An HEPN-like fold 1-II region spans residues 752–813; sequence ILKYTERLNM…NLDNNRVTED (62 aa). The binds crRNA repeat stretch occupies residues 780-783; it reads SLEK. Residues 804-810 form a binds crRNA spacer and target RNA region; sequence NLDNNRV. A linker region spans residues 814-946; that stretch reads FELEADEIGK…EYTHLKNKVE (133 aa). Binds crRNA spacer regions lie at residues 845–857 and 938–942; these read KIYFDGENIIKHR and YTHLK. The stretch at 880 to 946 forms a coiled coil; it reads YKISIEELKK…EYTHLKNKVE (67 aa). Residues 947 to 1159 are HEPN-like fold 2; the sequence is FNELNLLQGL…YKMEEKKSEN (213 aa). The segment at 962–963 is binds crRNA repeat; the sequence is HR. Residues 995-998 form a binds 3'-end of target RNA, in adjacent protein region; sequence FENK. Catalysis depends on for target RNA cleavage residues Arg1048 and His1053. Binds crRNA processing site stretches follow at residues 1072–1082 and 1104–1108; these read RKLLSYDRKLK and IGADK.

The protein belongs to the CRISPR-associated endoribonuclease Cas13a family. In terms of assembly, crystals show the 3'-end of target RNA interacting with an adjacent protein molecule, and mutagenesis of those amino acid residues decreases target RNA cleavage, but it is not clear if this is physiological. A divalent metal cation serves as cofactor.

With respect to regulation, target RNA acts as an activator for non-specific ssRNA cleavage; the target RNA and complementary crRNA must both be at least 20 nucleotides long to activate the HEPN-like catalytic pocket for RNase activity. Its function is as follows. CRISPR (clustered regularly interspaced short palindromic repeat), is an adaptive immune system that provides protection against mobile genetic elements (viruses, transposable elements and conjugative plasmids). CRISPR clusters contain sequences complementary to antecedent mobile elements (spacer sequences) and target invading nucleic acids. Unlike many single-component effectors, this CRISPR-Cas system targets RNA. CRISPR clusters are transcribed from pre-CRISPR RNA (crRNA) and processed into crRNA by this protein. pre-crRNA processing yields a 5'-OH and probably a 2',3'-cyclic phosphate. Also cleaves pre-crRNA from several other type VI-A CRISPR systems. Cleaves linear target ssRNA in a crRNA-dependent fashion, preferentially before U residues. Cleavage of target ssRNA is about 80-fold faster than pre-crRNA processing and uses a different active site. Binding a viable target RNA target activates this protein for non-specific RNA degradation in vitro (called collateral RNA degradation). Activation occurs with 10 fM target RNA. crRNA maturation is not essential for activation of RNA degradation, but lack of mature crRNA (due to mutagenesis) decreases activation levels. This system has a 3' protospacer flanking site in the target RNA (PFS), which is C and unavailable to base pair with crRNA (PFS is equivalent to PAM, the protospacer adjacent motif). The protein is CRISPR-associated endoribonuclease Cas13a of Leptotrichia buccalis (strain ATCC 14201 / DSM 1135 / JCM 12969 / NCTC 10249 / C-1013-b).